A 701-amino-acid polypeptide reads, in one-letter code: DNA ligase (701 aa).

NAD(+) contacts are provided by residues 43 to 47, 92 to 93, and Glu126; these read DADYD and SL. The active-site N6-AMP-lysine intermediate is Lys128. Residues Arg149, Glu186, Lys302, and Lys326 each coordinate NAD(+). Positions 417, 420, 440, and 446 each coordinate Zn(2+). Positions 622–701 constitute a BRCT domain; that stretch reads ETGSPVTGKT…DEWLALIGET (80 aa).

This sequence belongs to the NAD-dependent DNA ligase family. LigA subfamily. It depends on Mg(2+) as a cofactor. Mn(2+) serves as cofactor.

It catalyses the reaction NAD(+) + (deoxyribonucleotide)n-3'-hydroxyl + 5'-phospho-(deoxyribonucleotide)m = (deoxyribonucleotide)n+m + AMP + beta-nicotinamide D-nucleotide.. DNA ligase that catalyzes the formation of phosphodiester linkages between 5'-phosphoryl and 3'-hydroxyl groups in double-stranded DNA using NAD as a coenzyme and as the energy source for the reaction. It is essential for DNA replication and repair of damaged DNA. This Hyphomonas neptunium (strain ATCC 15444) protein is DNA ligase.